The sequence spans 154 residues: Myoglobin (154 aa).

Residues E2–K148 enclose the Globin domain. Residue H65 participates in nitrite binding. Position 65 (H65) interacts with O2. H94 provides a ligand contact to heme b.

Belongs to the globin family. Monomeric.

The protein localises to the cytoplasm. Its subcellular location is the sarcoplasm. The catalysed reaction is Fe(III)-heme b-[protein] + nitric oxide + H2O = Fe(II)-heme b-[protein] + nitrite + 2 H(+). It carries out the reaction H2O2 + AH2 = A + 2 H2O. Monomeric heme protein which primary function is to store oxygen and facilitate its diffusion within muscle tissues. Reversibly binds oxygen through a pentacoordinated heme iron and enables its timely and efficient release as needed during periods of heightened demand. Depending on the oxidative conditions of tissues and cells, and in addition to its ability to bind oxygen, it also has a nitrite reductase activity whereby it regulates the production of bioactive nitric oxide. Under stress conditions, like hypoxia and anoxia, it also protects cells against reactive oxygen species thanks to its pseudoperoxidase activity. The sequence is that of Myoglobin (MB) from Alligator mississippiensis (American alligator).